The chain runs to 1007 residues: Retinoblastoma-related protein (1007 aa).

The tract at residues 406–604 (TPVTTAMTTA…EKGSSMYNSL (199 aa)) is domain A. Positions 406–856 (TPVTTAMTTA…NEIFIPAVKP (451 aa)) are pocket. The segment at 605–725 (IVARAALSAE…PGREGETCAE (121 aa)) is spacer. The segment at 644 to 665 (PVPSLQKRESSPGQNGDIRSPK) is disordered. The segment at 726-856 (TGINIFFSKI…NEIFIPAVKP (131 aa)) is domain B.

The protein belongs to the retinoblastoma protein (RB) family.

The protein resides in the nucleus. Functionally, regulator of biological processes that recruits a histone deacetylase to control gene transcription. May play a role in the entry into mitosis, negatively regulating the cell proliferation. Formation of stable complexes with geminiviridae replication-associated proteins may create a cellular environment which favors viral DNA replication. The protein is Retinoblastoma-related protein (RBR) of Vitis vinifera (Grape).